A 270-amino-acid polypeptide reads, in one-letter code: Putative phosphoenolpyruvate synthase regulatory protein (270 aa).

150–157 (GVSRCGKT) is an ADP binding site.

The protein belongs to the pyruvate, phosphate/water dikinase regulatory protein family. PSRP subfamily.

The enzyme catalyses [pyruvate, water dikinase] + ADP = [pyruvate, water dikinase]-phosphate + AMP + H(+). It catalyses the reaction [pyruvate, water dikinase]-phosphate + phosphate + H(+) = [pyruvate, water dikinase] + diphosphate. Bifunctional serine/threonine kinase and phosphorylase involved in the regulation of the phosphoenolpyruvate synthase (PEPS) by catalyzing its phosphorylation/dephosphorylation. The chain is Putative phosphoenolpyruvate synthase regulatory protein from Shewanella putrefaciens (strain CN-32 / ATCC BAA-453).